The chain runs to 430 residues: GTPase Obg (430 aa).

Residues 1–158 (MFVDQVKISL…LDVSLELKLL (158 aa)) enclose the Obg domain. A disordered region spans residues 118-145 (KGGRGGRGNSRFATPRNPAPDFSEKGEP). The OBG-type G domain occupies 159 to 329 (ADVGLVGFPS…LLYAIADKLE (171 aa)). Residues 165-172 (GFPSVGKS), 190-194 (FTTIK), 212-215 (DLPG), 282-285 (NKMD), and 310-312 (STI) each bind GTP. 2 residues coordinate Mg(2+): Ser-172 and Thr-192. Positions 352–430 (KHTPSQDKFT…ILGGEFEFVE (79 aa)) constitute an OCT domain.

This sequence belongs to the TRAFAC class OBG-HflX-like GTPase superfamily. OBG GTPase family. As to quaternary structure, monomer. Requires Mg(2+) as cofactor.

It is found in the cytoplasm. Its function is as follows. An essential GTPase which binds GTP, GDP and possibly (p)ppGpp with moderate affinity, with high nucleotide exchange rates and a fairly low GTP hydrolysis rate. Plays a role in control of the cell cycle, stress response, ribosome biogenesis and in those bacteria that undergo differentiation, in morphogenesis control. The chain is GTPase Obg from Staphylococcus aureus (strain COL).